A 478-amino-acid chain; its full sequence is Aspartyl/glutamyl-tRNA(Asn/Gln) amidotransferase subunit B (478 aa).

Belongs to the GatB/GatE family. GatB subfamily. Heterotrimer of A, B and C subunits.

It catalyses the reaction L-glutamyl-tRNA(Gln) + L-glutamine + ATP + H2O = L-glutaminyl-tRNA(Gln) + L-glutamate + ADP + phosphate + H(+). It carries out the reaction L-aspartyl-tRNA(Asn) + L-glutamine + ATP + H2O = L-asparaginyl-tRNA(Asn) + L-glutamate + ADP + phosphate + 2 H(+). Its function is as follows. Allows the formation of correctly charged Asn-tRNA(Asn) or Gln-tRNA(Gln) through the transamidation of misacylated Asp-tRNA(Asn) or Glu-tRNA(Gln) in organisms which lack either or both of asparaginyl-tRNA or glutaminyl-tRNA synthetases. The reaction takes place in the presence of glutamine and ATP through an activated phospho-Asp-tRNA(Asn) or phospho-Glu-tRNA(Gln). The protein is Aspartyl/glutamyl-tRNA(Asn/Gln) amidotransferase subunit B of Lachnoclostridium phytofermentans (strain ATCC 700394 / DSM 18823 / ISDg) (Clostridium phytofermentans).